Consider the following 437-residue polypeptide: Phosphomethylpyrimidine synthase (437 aa).

Substrate-binding positions include asparagine 69, methionine 98, tyrosine 127, histidine 163, 185-187 (SRG), 226-229 (DACR), and glutamate 265. Histidine 269 is a binding site for Zn(2+). A substrate-binding site is contributed by tyrosine 292. Histidine 333 provides a ligand contact to Zn(2+). Cysteine 409, cysteine 412, and cysteine 416 together coordinate [4Fe-4S] cluster.

This sequence belongs to the ThiC family. Requires [4Fe-4S] cluster as cofactor.

The catalysed reaction is 5-amino-1-(5-phospho-beta-D-ribosyl)imidazole + S-adenosyl-L-methionine = 4-amino-2-methyl-5-(phosphooxymethyl)pyrimidine + CO + 5'-deoxyadenosine + formate + L-methionine + 3 H(+). It participates in cofactor biosynthesis; thiamine diphosphate biosynthesis. In terms of biological role, catalyzes the synthesis of the hydroxymethylpyrimidine phosphate (HMP-P) moiety of thiamine from aminoimidazole ribotide (AIR) in a radical S-adenosyl-L-methionine (SAM)-dependent reaction. In Clostridium botulinum (strain Loch Maree / Type A3), this protein is Phosphomethylpyrimidine synthase.